The primary structure comprises 255 residues: tRNA pseudouridine synthase A (255 aa).

Asp52 (nucleophile) is an active-site residue. Tyr111 provides a ligand contact to substrate.

Belongs to the tRNA pseudouridine synthase TruA family. Homodimer.

The catalysed reaction is uridine(38/39/40) in tRNA = pseudouridine(38/39/40) in tRNA. Its function is as follows. Formation of pseudouridine at positions 38, 39 and 40 in the anticodon stem and loop of transfer RNAs. The chain is tRNA pseudouridine synthase A from Nitrobacter winogradskyi (strain ATCC 25391 / DSM 10237 / CIP 104748 / NCIMB 11846 / Nb-255).